A 1827-amino-acid chain; its full sequence is Sucrase-isomaltase, intestinal (1827 aa).

Over 2–12 the chain is Cytoplasmic; that stretch reads AKRKFSGLEIT. The residue at position 7 (Ser-7) is a Phosphoserine; by PKA. The helical; Signal-anchor for type II membrane protein transmembrane segment at 13–32 threads the bilayer; the sequence is LIVLFVIVFIIAIALIAVLA. Topologically, residues 33–1827 are lumenal; the sequence is TKTPAVEEVN…LDDPIEISWS (1795 aa). Residues 39 to 64 form a disordered region; sequence EEVNPSSSTPTTTSTTTSTSGSVSCP. The span at 43-64 shows a compositional bias: low complexity; the sequence is PSSSTPTTTSTTTSTSGSVSCP. Positions 61–110 constitute a P-type 1 domain; that stretch reads VSCPSELNEVVNERINCIPEQSPTQAICAQRNCCWRPWNNSDIPWCFFVD. 3 disulfide bridges follow: Cys-63–Cys-94, Cys-77–Cys-93, and Cys-88–Cys-106. A glycan (N-linked (GlcNAc...) asparagine) is linked at Asn-99. Positions 110-1007 are isomaltase; sequence DNHGYNVEGM…DLQLNPTRTR (898 aa). 2 residues coordinate substrate: Asp-264 and Asp-388. Tyr-391 and Tyr-400 each carry sulfotyrosine. A glycan (N-linked (GlcNAc...) asparagine) is linked at Asn-455. Asp-505 acts as the Nucleophile; for isomaltase activity in catalysis. Cysteines 520 and 545 form a disulfide. Arg-588 contributes to the substrate binding site. Asp-604 (for isomaltase activity) is an active-site residue. Cysteines 635 and 646 form a disulfide. Residue His-662 coordinates substrate. Asn-859, Asn-896, and Asn-904 each carry an N-linked (GlcNAc...) asparagine glycan. In terms of domain architecture, P-type 2 spans 932–978; that stretch reads DQTFLESEKITCYPDADIATQEKCTQRGCIWDTNTVNPRAPECYFPK. A sucrase region spans residues 1008-1827; the sequence is ITLPSEPITN…LDDPIEISWS (820 aa). N-linked (GlcNAc...) asparagine glycans are attached at residues Asn-1235, Asn-1303, Asn-1325, Asn-1340, Asn-1354, and Asn-1368. Tyr-1382 and Tyr-1385 each carry sulfotyrosine. The active-site Nucleophile; for sucrase activity is Asp-1394. The active-site For sucrase activity is the Glu-1397. A glycan (N-linked (GlcNAc...) asparagine) is linked at Asn-1403. Asp-1500 acts as the Proton donor; for sucrase activity in catalysis. N-linked (GlcNAc...) asparagine glycosylation is found at Asn-1535, Asn-1572, Asn-1748, Asn-1763, and Asn-1799.

It belongs to the glycosyl hydrolase 31 family. In terms of assembly, the resulting sucrase and isomaltase subunits stay associated with one another in a complex by non-covalent linkages. The precursor is proteolytically cleaved when exposed to pancreatic proteases in the intestinal lumen. In terms of processing, N- and O-glycosylated. Post-translationally, sulfated.

Its subcellular location is the apical cell membrane. It catalyses the reaction Hydrolysis of sucrose and maltose by an alpha-D-glucosidase-type action.. The enzyme catalyses Hydrolysis of (1-&gt;6)-alpha-D-glucosidic linkages in some oligosaccharides produced from starch and glycogen by alpha-amylase, and in isomaltose.. Its function is as follows. Plays an important role in the final stage of carbohydrate digestion. Isomaltase activity is specific for both alpha-1,4- and alpha-1,6-oligosaccharides. This is Sucrase-isomaltase, intestinal (SI) from Oryctolagus cuniculus (Rabbit).